The sequence spans 271 residues: Shikimate kinase (271 aa).

83–93 (PIAMGLKSSSA) is a binding site for ATP.

The protein belongs to the GHMP kinase family. Archaeal shikimate kinase subfamily.

It is found in the cytoplasm. It carries out the reaction shikimate + ATP = 3-phosphoshikimate + ADP + H(+). It participates in metabolic intermediate biosynthesis; chorismate biosynthesis; chorismate from D-erythrose 4-phosphate and phosphoenolpyruvate: step 5/7. The sequence is that of Shikimate kinase from Thermococcus kodakarensis (strain ATCC BAA-918 / JCM 12380 / KOD1) (Pyrococcus kodakaraensis (strain KOD1)).